Consider the following 105-residue polypeptide: MPEKYAFKMKLKPGMKAEYKKRHDEIWPSLVSLLKQAGVSDYSIHLDEETNILFGVLWRRDHHGMAELPKQPVMQRWWADMADIMETGPDNEPVAVPLETMFHMA.

Y19 contacts substrate. Residue H23 is the Proton donor of the active site. Residues Y42 and W77 to W78 contribute to the substrate site.

This sequence belongs to the rhamnose mutarotase family. Homodimer.

The protein resides in the cytoplasm. It catalyses the reaction alpha-L-rhamnose = beta-L-rhamnose. It functions in the pathway carbohydrate metabolism; L-rhamnose metabolism. Involved in the anomeric conversion of L-rhamnose. This chain is L-rhamnose mutarotase, found in Mesorhizobium japonicum (strain LMG 29417 / CECT 9101 / MAFF 303099) (Mesorhizobium loti (strain MAFF 303099)).